We begin with the raw amino-acid sequence, 188 residues long: Protein salivary glands marred (188 aa).

This sequence belongs to the TNFAIP8 family. As to quaternary structure, interacts with the Ste20-like MAP kinase msn.

It is found in the cytoplasm. Its subcellular location is the cytoskeleton. Functionally, important for modulating JNK signaling, cytoskeletal remodeling and autophagy in larval salivary glands. During salivary gland development, involved in the positive regulation of the JNK signaling pathway, acting downstream of the TNF ligand egr and upstream of bsk. The polypeptide is Protein salivary glands marred (Drosophila melanogaster (Fruit fly)).